Reading from the N-terminus, the 404-residue chain is Probable tRNA sulfurtransferase (404 aa).

Residues 60-165 form the THUMP domain; that stretch reads QPIVEALKLV…DEAAYISYEE (106 aa). Residues 183–184, 208–209, arginine 265, glycine 287, and glutamine 296 each bind ATP; these read ML and HF.

This sequence belongs to the ThiI family.

It localises to the cytoplasm. It carries out the reaction [ThiI sulfur-carrier protein]-S-sulfanyl-L-cysteine + a uridine in tRNA + 2 reduced [2Fe-2S]-[ferredoxin] + ATP + H(+) = [ThiI sulfur-carrier protein]-L-cysteine + a 4-thiouridine in tRNA + 2 oxidized [2Fe-2S]-[ferredoxin] + AMP + diphosphate. It catalyses the reaction [ThiS sulfur-carrier protein]-C-terminal Gly-Gly-AMP + S-sulfanyl-L-cysteinyl-[cysteine desulfurase] + AH2 = [ThiS sulfur-carrier protein]-C-terminal-Gly-aminoethanethioate + L-cysteinyl-[cysteine desulfurase] + A + AMP + 2 H(+). It functions in the pathway cofactor biosynthesis; thiamine diphosphate biosynthesis. In terms of biological role, catalyzes the ATP-dependent transfer of a sulfur to tRNA to produce 4-thiouridine in position 8 of tRNAs, which functions as a near-UV photosensor. Also catalyzes the transfer of sulfur to the sulfur carrier protein ThiS, forming ThiS-thiocarboxylate. This is a step in the synthesis of thiazole, in the thiamine biosynthesis pathway. The sulfur is donated as persulfide by IscS. In Streptococcus pyogenes serotype M2 (strain MGAS10270), this protein is Probable tRNA sulfurtransferase.